We begin with the raw amino-acid sequence, 945 residues long: Protein translocase subunit SecA (945 aa).

Residues Gln-90, 108–112 (GEGKT), and Asp-509 contribute to the ATP site. The interval 533–568 (VKPEDGHKPPVPLQRRSESSGFGEDKDVTTDNSKPL) is disordered. The span at 547 to 561 (RRSESSGFGEDKDVT) shows a compositional bias: basic and acidic residues.

Belongs to the SecA family. Monomer and homodimer. Part of the essential Sec protein translocation apparatus which comprises SecA, SecYEG and auxiliary proteins SecDF. Other proteins may also be involved.

The protein resides in the cell inner membrane. The protein localises to the cellular thylakoid membrane. It localises to the cytoplasm. It carries out the reaction ATP + H2O + cellular proteinSide 1 = ADP + phosphate + cellular proteinSide 2.. In terms of biological role, part of the Sec protein translocase complex. Interacts with the SecYEG preprotein conducting channel. Has a central role in coupling the hydrolysis of ATP to the transfer of proteins into and across the cell membrane, serving as an ATP-driven molecular motor driving the stepwise translocation of polypeptide chains across the membrane. Probably participates in protein translocation into and across both the cytoplasmic and thylakoid membranes in cyanobacterial cells. The polypeptide is Protein translocase subunit SecA (Prochlorococcus marinus (strain MIT 9211)).